A 364-amino-acid chain; its full sequence is Paraneoplastic antigen Ma2 homolog (364 aa).

At A2 the chain carries N-acetylalanine. The span at 335–351 shows a compositional bias: acidic residues; that stretch reads EEEEATFENENTEEPEG. The interval 335 to 364 is disordered; that stretch reads EEEEATFENENTEEPEGGDGYGHWGNEAND.

This sequence belongs to the PNMA family.

The protein resides in the nucleus. It localises to the nucleolus. The polypeptide is Paraneoplastic antigen Ma2 homolog (PNMA2) (Bos taurus (Bovine)).